The primary structure comprises 877 residues: EF-hand domain-containing family member B (877 aa).

Disordered regions lie at residues 1–47 and 268–290; these read MCSF…GRKS and AQQPEEQREAENTEPGVEPPDRI. EF-hand domains lie at 605–640 and 641–676; these read QNFDTLLAAFRHYDKKGDGVIDRAELQEACDQACLH and LDEKLLDQLFEYCDVDKDGLINYLEFANFLTWKDKT. The Ca(2+) site is built by Asp618, Asp622, Glu629, Asp654, Asp656, Asp658, and Glu665.

As to quaternary structure, microtubule inner protein component of sperm flagellar doublet microtubules. Interacts with STIM1 and ORAI1; the interactions take place upon Ca(2+)-store depletion and dissociate through a Ca(2+)-dependent mechanism. Interaction with STIM1 inhibits STIM1 interaction with SARAF. Expressed in trachea multiciliated cells.

The protein localises to the cytoplasm. Its subcellular location is the cytoskeleton. The protein resides in the cilium axoneme. It is found in the flagellum axoneme. In terms of biological role, microtubule inner protein (MIP) part of the dynein-decorated doublet microtubules (DMTs) in cilia axoneme, which is required for motile cilia beating. Cytosolic sensor for calcium, modulates the interaction of STIM1 and ORAI1 upon store depletion and the activation of store-operated Ca(2+) entry (SOCE) and NFAT translocation from cytosol to nucleus. The sequence is that of EF-hand domain-containing family member B from Bos taurus (Bovine).